Here is a 397-residue protein sequence, read N- to C-terminus: Enoyl-[acyl-carrier-protein] reductase [NADH] (397 aa).

Residues 48–53 (GASTGY), 74–75 (FE), 111–112 (DA), and 139–140 (VA) each bind NAD(+). Substrate is bound at residue tyrosine 225. Tyrosine 235 acts as the Proton donor in catalysis. Residues lysine 244 and 273–275 (VVT) contribute to the NAD(+) site.

Belongs to the TER reductase family. In terms of assembly, monomer.

The enzyme catalyses a 2,3-saturated acyl-[ACP] + NAD(+) = a (2E)-enoyl-[ACP] + NADH + H(+). Its pathway is lipid metabolism; fatty acid biosynthesis. Its function is as follows. Involved in the final reduction of the elongation cycle of fatty acid synthesis (FAS II). Catalyzes the reduction of a carbon-carbon double bond in an enoyl moiety that is covalently linked to an acyl carrier protein (ACP). The sequence is that of Enoyl-[acyl-carrier-protein] reductase [NADH] from Burkholderia mallei (strain NCTC 10247).